The sequence spans 307 residues: Ribosomal RNA small subunit methyltransferase H (307 aa).

Residues 31–33 (GGH), D51, Y83, D97, and Q104 each bind S-adenosyl-L-methionine.

Belongs to the methyltransferase superfamily. RsmH family.

The protein localises to the cytoplasm. The catalysed reaction is cytidine(1402) in 16S rRNA + S-adenosyl-L-methionine = N(4)-methylcytidine(1402) in 16S rRNA + S-adenosyl-L-homocysteine + H(+). Functionally, specifically methylates the N4 position of cytidine in position 1402 (C1402) of 16S rRNA. This Buchnera aphidicola subsp. Cinara cedri (strain Cc) protein is Ribosomal RNA small subunit methyltransferase H.